Consider the following 151-residue polypeptide: Putative pre-16S rRNA nuclease (151 aa).

It belongs to the YqgF nuclease family.

The protein localises to the cytoplasm. In terms of biological role, could be a nuclease involved in processing of the 5'-end of pre-16S rRNA. This chain is Putative pre-16S rRNA nuclease, found in Bifidobacterium adolescentis (strain ATCC 15703 / DSM 20083 / NCTC 11814 / E194a).